A 219-amino-acid chain; its full sequence is Thiopurine S-methyltransferase (219 aa).

S-adenosyl-L-methionine-binding residues include Trp-10, Leu-45, Glu-66, and Arg-123.

The protein belongs to the class I-like SAM-binding methyltransferase superfamily. TPMT family.

It localises to the cytoplasm. It catalyses the reaction S-adenosyl-L-methionine + a thiopurine = S-adenosyl-L-homocysteine + a thiopurine S-methylether.. The protein is Thiopurine S-methyltransferase of Shewanella frigidimarina (strain NCIMB 400).